Here is a 492-residue protein sequence, read N- to C-terminus: Glutamyl-tRNA(Gln) amidotransferase subunit A (492 aa).

Active-site charge relay system residues include lysine 78 and serine 158. Serine 182 acts as the Acyl-ester intermediate in catalysis.

Belongs to the amidase family. GatA subfamily. Heterotrimer of A, B and C subunits.

It catalyses the reaction L-glutamyl-tRNA(Gln) + L-glutamine + ATP + H2O = L-glutaminyl-tRNA(Gln) + L-glutamate + ADP + phosphate + H(+). Its function is as follows. Allows the formation of correctly charged Gln-tRNA(Gln) through the transamidation of misacylated Glu-tRNA(Gln) in organisms which lack glutaminyl-tRNA synthetase. The reaction takes place in the presence of glutamine and ATP through an activated gamma-phospho-Glu-tRNA(Gln). The polypeptide is Glutamyl-tRNA(Gln) amidotransferase subunit A (Rhodopseudomonas palustris (strain ATCC BAA-98 / CGA009)).